The following is a 98-amino-acid chain: uncharacterized protein (98 aa).

Belongs to the HesB/IscA family.

This is an uncharacterized protein from Staphylococcus epidermidis (strain ATCC 35984 / DSM 28319 / BCRC 17069 / CCUG 31568 / BM 3577 / RP62A).